Consider the following 373-residue polypeptide: 1-deoxy-D-xylulose 5-phosphate reductoisomerase (373 aa).

T10, G11, S12, I13, R37, and N112 together coordinate NADPH. A 1-deoxy-D-xylulose 5-phosphate-binding site is contributed by K113. E114 serves as a coordination point for NADPH. Residue D134 participates in Mn(2+) binding. 1-deoxy-D-xylulose 5-phosphate-binding residues include S135, E136, S160, and H183. E136 contributes to the Mn(2+) binding site. An NADPH-binding site is contributed by G189. 4 residues coordinate 1-deoxy-D-xylulose 5-phosphate: S196, N201, K202, and E205. E205 contributes to the Mn(2+) binding site.

Belongs to the DXR family. It depends on Mg(2+) as a cofactor. The cofactor is Mn(2+).

It catalyses the reaction 2-C-methyl-D-erythritol 4-phosphate + NADP(+) = 1-deoxy-D-xylulose 5-phosphate + NADPH + H(+). Its pathway is isoprenoid biosynthesis; isopentenyl diphosphate biosynthesis via DXP pathway; isopentenyl diphosphate from 1-deoxy-D-xylulose 5-phosphate: step 1/6. Functionally, catalyzes the NADPH-dependent rearrangement and reduction of 1-deoxy-D-xylulose-5-phosphate (DXP) to 2-C-methyl-D-erythritol 4-phosphate (MEP). The protein is 1-deoxy-D-xylulose 5-phosphate reductoisomerase of Persephonella marina (strain DSM 14350 / EX-H1).